We begin with the raw amino-acid sequence, 395 residues long: Major outer membrane protein P.IA (395 aa).

The first 19 residues, 1 to 19, serve as a signal peptide directing secretion; it reads MRKKLTALVLSALPLAAVA.

It belongs to the Gram-negative porin family. As to quaternary structure, homotrimer.

Its subcellular location is the cell outer membrane. Functionally, serves as a slightly cation selective porin. Major antigen on the gonococcal cell surface and it may have pathogenic properties in addition to its porin activity. The chain is Major outer membrane protein P.IA (porA) from Neisseria meningitidis serogroup A / serotype 4A (strain DSM 15465 / Z2491).